A 146-amino-acid chain; its full sequence is MAGVNQACIFCEIVRNPTTTRLLHTDEKVIAFQDIKPAAQRHYLVIPKEHIPTVNDLQRRDEDYSLVRHMLSVGQQLLQKDAPQSIHRFGFHQPPFNSVDHLHLHCFALPYVPRWKAIKYKSLGPLGGFIEAETLLEKIRPLLSKV.

An HIT domain is found at 9–120 (IFCEIVRNPT…YVPRWKAIKY (112 aa)). Residues 101 to 105 (HLHLH) carry the Histidine triad motif motif. H105 serves as the catalytic Tele-AMP-histidine intermediate.

Homodimer.

Its subcellular location is the peroxisome. It catalyses the reaction sulfate + ADP + H(+) = adenosine 5'-phosphosulfate + phosphate. The enzyme catalyses adenosine 5'-phosphosulfate + H2O = sulfate + AMP + 2 H(+). Its activity is regulated as follows. The adenosine 5'-phosphosulfate phosphorylase activity is enhanced at low pH. Possesses adenylylsulfatase activity in vitro, releasing AMP and sulfate from adenylyl sulfate. Also possesses adenosine 5'-phosphosulfate (APS) phosphorylase activity in vitro. Catalyzes the phosphorolysis of APS, leading to ADP and sulfate. This Arabidopsis thaliana (Mouse-ear cress) protein is Bifunctional adenosine 5'-phosphosulfate phosphorylase/adenylylsulfatase HINT4.